We begin with the raw amino-acid sequence, 414 residues long: Signal recognition particle receptor FtsY (414 aa).

Residues 216–223 (GVNGVGKT), 298–302 (DTAGR), and 362–365 (TKLD) each bind GTP.

It belongs to the GTP-binding SRP family. FtsY subfamily. As to quaternary structure, part of the signal recognition particle protein translocation system, which is composed of SRP and FtsY. SRP is a ribonucleoprotein composed of Ffh and a 4.5S RNA molecule.

The protein localises to the cell inner membrane. The protein resides in the cytoplasm. It carries out the reaction GTP + H2O = GDP + phosphate + H(+). In terms of biological role, involved in targeting and insertion of nascent membrane proteins into the cytoplasmic membrane. Acts as a receptor for the complex formed by the signal recognition particle (SRP) and the ribosome-nascent chain (RNC). Interaction with SRP-RNC leads to the transfer of the RNC complex to the Sec translocase for insertion into the membrane, the hydrolysis of GTP by both Ffh and FtsY, and the dissociation of the SRP-FtsY complex into the individual components. This is Signal recognition particle receptor FtsY from Haemophilus influenzae (strain ATCC 51907 / DSM 11121 / KW20 / Rd).